Reading from the N-terminus, the 152-residue chain is Actin-depolymerizing factor 2, isoform c (152 aa).

One can recognise an ADF-H domain in the interval 4 to 147; that stretch reads GVKVDPSCKN…DEKSVKSDLM (144 aa).

This sequence belongs to the actin-binding proteins ADF family.

Functionally, depolymerizes growing actin filaments in muscle cells; required for the assembly of actin filaments into the functional contractile myofilament lattice of muscle. The protein is Actin-depolymerizing factor 2, isoform c of Caenorhabditis elegans.